We begin with the raw amino-acid sequence, 121 residues long: Alpha-endosulfine (121 aa).

The tract at residues methionine 1–phenylalanine 53 is disordered. Position 2 is an N-acetylserine (serine 2). A Phosphoserine modification is found at serine 2. The span at glutamate 16 to leucine 37 shows a compositional bias: basic and acidic residues. Phosphothreonine is present on threonine 21. Serine 43 is subject to Phosphoserine. Serine 67 carries the post-translational modification Phosphoserine; by GWL. Residues asparagine 79 to glutamate 121 form a disordered region. Serine 109 carries the post-translational modification Phosphoserine; by PKA.

The protein belongs to the endosulfine family. Interacts (when phosphorylated at Ser-67) with PPP2R2D. Interacts with ABCC8. Interacts with SNCA; interaction is disrupted when phosphorylated at Ser-109. Phosphorylation at Ser-67 by GWL during mitosis is essential for interaction with PPP2R2D (PR55-delta) and subsequent inactivation of PP2A. Phosphorylated by PKA.

It is found in the cytoplasm. Functionally, protein phosphatase inhibitor that specifically inhibits protein phosphatase 2A (PP2A) during mitosis. When phosphorylated at Ser-67 during mitosis, specifically interacts with PPP2R2D (PR55-delta) and inhibits its activity, leading to inactivation of PP2A, an essential condition to keep cyclin-B1-CDK1 activity high during M phase. Also acts as a stimulator of insulin secretion by interacting with sulfonylurea receptor (ABCC8), thereby preventing sulfonylurea from binding to its receptor and reducing K(ATP) channel currents. In Bos taurus (Bovine), this protein is Alpha-endosulfine (ENSA).